We begin with the raw amino-acid sequence, 465 residues long: Ribulose bisphosphate carboxylase large chain (465 aa).

Lys4 is modified (N6,N6,N6-trimethyllysine). Residues Asn113 and Thr163 each contribute to the substrate site. Lys165 functions as the Proton acceptor in the catalytic mechanism. Position 167 (Lys167) interacts with substrate. Residues Lys191, Asp193, and Glu194 each contribute to the Mg(2+) site. N6-carboxylysine is present on Lys191. Residue His284 is the Proton acceptor of the active site. Substrate-binding residues include Arg285, His317, and Ser369.

This sequence belongs to the RuBisCO large chain family. Type I subfamily. In terms of assembly, heterohexadecamer of 8 large chains and 8 small chains; disulfide-linked. The disulfide link is formed within the large subunit homodimers. The cofactor is Mg(2+). In terms of processing, the disulfide bond which can form in the large chain dimeric partners within the hexadecamer appears to be associated with oxidative stress and protein turnover.

Its subcellular location is the plastid. It is found in the chloroplast. The catalysed reaction is 2 (2R)-3-phosphoglycerate + 2 H(+) = D-ribulose 1,5-bisphosphate + CO2 + H2O. It catalyses the reaction D-ribulose 1,5-bisphosphate + O2 = 2-phosphoglycolate + (2R)-3-phosphoglycerate + 2 H(+). RuBisCO catalyzes two reactions: the carboxylation of D-ribulose 1,5-bisphosphate, the primary event in carbon dioxide fixation, as well as the oxidative fragmentation of the pentose substrate in the photorespiration process. Both reactions occur simultaneously and in competition at the same active site. In Cyrilla racemiflora (Swamp titi), this protein is Ribulose bisphosphate carboxylase large chain.